The chain runs to 1215 residues: Zinc finger SWIM domain-containing protein 6 (1215 aa).

Disordered regions lie at residues 1–46 and 133–161; these read MAER…RPGP and AAGG…SPAA. Gly residues-rich tracts occupy residues 18 to 38 and 133 to 155; these read PGGG…GGGY and AAGG…GGGS. The SWIM-type zinc finger occupies 246–283; sequence CNVAISFDRCKITSVTCSCGNKDIFYCAHVVALSLYRI.

Its function is as follows. involved in nervous system development, important for striatal morphology and motor regulation. The protein is Zinc finger SWIM domain-containing protein 6 of Homo sapiens (Human).